Reading from the N-terminus, the 63-residue chain is Trypsin inhibitor 5 (63 aa).

Positions 1–21 are cleaved as a signal peptide; that stretch reads MASVAESSGVVEVIELISDGG. Residues 22 to 34 constitute a propeptide that is removed on maturation; that stretch reads NDLPRKIMSGRHG. Disulfide bonds link C37-C54, C44-C56, and C50-C62.

It belongs to the protease inhibitor I7 (squash-type serine protease inhibitor) family.

Its subcellular location is the secreted. Its function is as follows. Inhibits trypsin. This chain is Trypsin inhibitor 5, found in Luffa aegyptiaca (Sponge gourd).